A 237-amino-acid polypeptide reads, in one-letter code: Ribonuclease PH (237 aa).

Residues arginine 86 and 124–126 (GTR) each bind phosphate.

This sequence belongs to the RNase PH family. As to quaternary structure, homohexameric ring arranged as a trimer of dimers.

It catalyses the reaction tRNA(n+1) + phosphate = tRNA(n) + a ribonucleoside 5'-diphosphate. Phosphorolytic 3'-5' exoribonuclease that plays an important role in tRNA 3'-end maturation. Removes nucleotide residues following the 3'-CCA terminus of tRNAs; can also add nucleotides to the ends of RNA molecules by using nucleoside diphosphates as substrates, but this may not be physiologically important. Probably plays a role in initiation of 16S rRNA degradation (leading to ribosome degradation) during starvation. The polypeptide is Ribonuclease PH (Xanthobacter autotrophicus (strain ATCC BAA-1158 / Py2)).